The sequence spans 124 residues: Small ribosomal subunit protein uS12 (124 aa).

The segment at 1–32 is disordered; the sequence is MPTINQLVRKGRRDKTAKVKTAALKGSPQRRG. 3-methylthioaspartic acid is present on Asp89. A disordered region spans residues 104–124; it reads TQGVKGRKQARSRYGAKKEKS. Over residues 108 to 118 the composition is skewed to basic residues; sequence KGRKQARSRYG.

It belongs to the universal ribosomal protein uS12 family. Part of the 30S ribosomal subunit. Contacts proteins S8 and S17. May interact with IF1 in the 30S initiation complex.

With S4 and S5 plays an important role in translational accuracy. Its function is as follows. Interacts with and stabilizes bases of the 16S rRNA that are involved in tRNA selection in the A site and with the mRNA backbone. Located at the interface of the 30S and 50S subunits, it traverses the body of the 30S subunit contacting proteins on the other side and probably holding the rRNA structure together. The combined cluster of proteins S8, S12 and S17 appears to hold together the shoulder and platform of the 30S subunit. This chain is Small ribosomal subunit protein uS12, found in Rhodococcus jostii (strain RHA1).